Here is a 253-residue protein sequence, read N- to C-terminus: Imidazole glycerol phosphate synthase subunit HisF (253 aa).

Residues Asp11 and Asp130 contribute to the active site.

This sequence belongs to the HisA/HisF family. Heterodimer of HisH and HisF.

It localises to the cytoplasm. The enzyme catalyses 5-[(5-phospho-1-deoxy-D-ribulos-1-ylimino)methylamino]-1-(5-phospho-beta-D-ribosyl)imidazole-4-carboxamide + L-glutamine = D-erythro-1-(imidazol-4-yl)glycerol 3-phosphate + 5-amino-1-(5-phospho-beta-D-ribosyl)imidazole-4-carboxamide + L-glutamate + H(+). It functions in the pathway amino-acid biosynthesis; L-histidine biosynthesis; L-histidine from 5-phospho-alpha-D-ribose 1-diphosphate: step 5/9. Functionally, IGPS catalyzes the conversion of PRFAR and glutamine to IGP, AICAR and glutamate. The HisF subunit catalyzes the cyclization activity that produces IGP and AICAR from PRFAR using the ammonia provided by the HisH subunit. This is Imidazole glycerol phosphate synthase subunit HisF from Acetivibrio thermocellus (strain ATCC 27405 / DSM 1237 / JCM 9322 / NBRC 103400 / NCIMB 10682 / NRRL B-4536 / VPI 7372) (Clostridium thermocellum).